A 1259-amino-acid chain; its full sequence is Clustered mitochondria protein homolog (1259 aa).

Over residues 1–27 the composition is skewed to polar residues; the sequence is MSQTNGNMEHSKETPQSQEVEQLTNGN. The interval 1–38 is disordered; the sequence is MSQTNGNMEHSKETPQSQEVEQLTNGNHPEEQQEEEEN. A Clu domain is found at 324-568; the sequence is DITRSQESYL…RVTPLDVMWQ (245 aa). Basic and acidic residues-rich tracts occupy residues 612–628 and 634–647; these read AEAEKEKPAESSESKEQ and TEEKTEESSDQERV. Disordered regions lie at residues 612-647 and 881-908; these read AEAEKEKPAESSESKEQDSEEKTEEKTEESSDQERV and VVNGANNAAQDEGKKKKKKGADKSPSRA. 3 TPR repeats span residues 982–1015, 1024–1057, and 1066–1099; these read AKLYHQLSMLYYQTDEKEAAVELARKAVIVTERT, ILAYLNLSLFEHASGNTKTALVYIKHAMDLWKII, and ITTMNNAAVMLQHLKQYADSRKWFEASLSVCESL. Disordered regions lie at residues 1192-1215 and 1229-1259; these read TKVQPQVGQTAPEASGAKNAANAS and EGGDTSSSRSKQKKRAAASNPKLRGSKKSSA.

Belongs to the CLU family. May associate with the eukaryotic translation initiation factor 3 (eIF-3) complex.

It localises to the cytoplasm. MRNA-binding protein involved in proper cytoplasmic distribution of mitochondria. In Aspergillus clavatus (strain ATCC 1007 / CBS 513.65 / DSM 816 / NCTC 3887 / NRRL 1 / QM 1276 / 107), this protein is Clustered mitochondria protein homolog.